We begin with the raw amino-acid sequence, 302 residues long: Mitochondrial glycine transporter (302 aa).

Solcar repeat units lie at residues 22–112 (HPVF…LKHH), 119–203 (PKPL…AKKL), and 213–297 (FSPV…MMEK). Transmembrane regions (helical) follow at residues 28-53 (FVCG…TRIQ), 87-113 (GVSP…KHHF), 125-150 (VMLG…TRYE), 178-201 (GLTA…TRAK), 217-243 (LNFS…KTHM), and 272-290 (GGVP…AWTV).

Belongs to the mitochondrial carrier (TC 2.A.29) family. SLC25A38 subfamily.

It localises to the mitochondrion inner membrane. It carries out the reaction glycine(in) = glycine(out). Mitochondrial glycine transporter that imports glycine into the mitochondrial matrix. Plays an important role in providing glycine for the first enzymatic step in heme biosynthesis, the condensation of glycine with succinyl-CoA to produce 5-aminolevulinate (ALA) in the mitochondrial matrix. Required during erythropoiesis. Its function is as follows. May play a role as pro-apoptotic protein that induces caspase-dependent apoptosis. The polypeptide is Mitochondrial glycine transporter (Xenopus laevis (African clawed frog)).